The chain runs to 426 residues: Dihydroorotase (426 aa).

Zn(2+) is bound by residues His58 and His60. Substrate contacts are provided by residues 60–62 (HLR) and Asn92. Asp150, His177, and His230 together coordinate Zn(2+). Residue Asn276 participates in substrate binding. Asp303 is a Zn(2+) binding site. The active site involves Asp303. Substrate-binding positions include His307 and 321–322 (FG).

This sequence belongs to the metallo-dependent hydrolases superfamily. DHOase family. Class I DHOase subfamily. Requires Zn(2+) as cofactor.

The catalysed reaction is (S)-dihydroorotate + H2O = N-carbamoyl-L-aspartate + H(+). It functions in the pathway pyrimidine metabolism; UMP biosynthesis via de novo pathway; (S)-dihydroorotate from bicarbonate: step 3/3. Catalyzes the reversible cyclization of carbamoyl aspartate to dihydroorotate. The sequence is that of Dihydroorotase from Listeria monocytogenes serotype 4b (strain CLIP80459).